Here is a 974-residue protein sequence, read N- to C-terminus: UvrABC system protein A (974 aa).

Position 34–41 (34–41) interacts with ATP; sequence GLSGSGKS. ABC transporter domains lie at 331–610 and 630–959; these read WARS…TNSL and ISKT…QFLK. Residue 663–670 coordinates ATP; the sequence is GVSGGGKS. The segment at 762 to 788 adopts a C4-type zinc-finger fold; it reads CEACQGDGVIKIEMHFLPDVYVTCDVC.

Belongs to the ABC transporter superfamily. UvrA family. Forms a heterotetramer with UvrB during the search for lesions.

It localises to the cytoplasm. Its function is as follows. The UvrABC repair system catalyzes the recognition and processing of DNA lesions. UvrA is an ATPase and a DNA-binding protein. A damage recognition complex composed of 2 UvrA and 2 UvrB subunits scans DNA for abnormalities. When the presence of a lesion has been verified by UvrB, the UvrA molecules dissociate. The chain is UvrABC system protein A from Brucella melitensis biotype 1 (strain ATCC 23456 / CCUG 17765 / NCTC 10094 / 16M).